Consider the following 442-residue polypeptide: Testican-1 (442 aa).

Residues 1–21 (MPAIAVLAAAAAAWCFLQVDS) form the signal peptide. Intrachain disulfides connect Cys-89–Cys-100, Cys-94–Cys-110, Cys-139–Cys-169, Cys-142–Cys-162, Cys-151–Cys-183, Cys-316–Cys-340, Cys-351–Cys-358, and Cys-360–Cys-379. The Kazal-like domain occupies 133–185 (PSNLVKCKPCPVAQSAMVCGSDGHTYTSKCKLEFHACSTGKSLNSLCDGPCPC). One can recognise a Thyroglobulin type-1 domain in the interval 313 to 379 (GLPCQNEMNR…GSRKQGTVSC (67 aa)). Disordered stretches follow at residues 375–395 (GTVSCEEEQETSGDFGSGGSV) and 420–442 (TRAVREDDEDEDDDKEDEVGYIW). Residues Ser-386 and Ser-391 are each glycosylated (O-linked (Xyl...) (glycosaminoglycan) serine). The segment covering 425–442 (EDDEDEDDDKEDEVGYIW) has biased composition (acidic residues).

Post-translationally, contains chondroitin sulfate and heparan sulfate O-linked oligosaccharides. As to expression, predominantly expressed in the postsynaptic area of pyramidal neurons.

The protein localises to the secreted. The protein resides in the extracellular space. Its subcellular location is the extracellular matrix. In terms of biological role, may play a role in cell-cell and cell-matrix interactions. May contribute to various neuronal mechanisms in the central nervous system. The sequence is that of Testican-1 (Spock1) from Mus musculus (Mouse).